Consider the following 580-residue polypeptide: Probable inositol transporter 2 (580 aa).

12 helical membrane passes run 36–56 (GIGGLLFGYDTGVISGALLYI), 71–91 (EMIVSMAVAGAIVGAAIGGWA), 106–126 (FLFLLGAIIMAAAPNPSLLVV), 129–149 (VFVGLGVGMASMTAPLYISEA), 156–176 (GALVSTNGFLITGGQFLSYLI), 189–209 (WMLGIAGIPALLQFVLMFTLP), 275–295 (GLIAGVGLQVFQQFVGINTVM), 315–335 (LLSLVTAGLNAFGSIISIYFI), 343–363 (LLIISLFGVIISLGILTGVFY), 452–472 (FGWFALLGLGLYIIFFSPGMG), 490–510 (ICGGIAATANWISNLIVAQSF), and 521–541 (WTFLIFGVISVIALLFVMVCV).

The protein belongs to the major facilitator superfamily. Sugar transporter (TC 2.A.1.1) family. Expressed in the tapetum, but not in pollen grains. Detected in leaf vascular tissue and in roots.

It localises to the cell membrane. With respect to regulation, inhibited by nickel and to a lesser extent by cobalt. Its function is as follows. Plasma membrane inositol-proton symporter. Specific for several inositol epimers, such as myoinositol and scylloinositol. D-chiroinositol, mucoinositol, alloinositol and pinitol are also transported with a lower activity. Not active with galactinol and phytate. The protein is Probable inositol transporter 2 (INT2) of Arabidopsis thaliana (Mouse-ear cress).